The chain runs to 284 residues: Protein phosphatase 1 regulatory subunit 3B (284 aa).

The PP1-binding motif motif lies at 61–64; that stretch reads RVSF. Positions 124–232 constitute a CBM21 domain; the sequence is RNRLQTNHVC…SNKGKNYRIT (109 aa). Phosphoserine is present on Ser260.

As to quaternary structure, interacts with glycogen, PPP1CC catalytic subunit of PP1 and PYGL. Associates with glycogen particles. Forms complexes with debranching enzyme, glycogen phosphorylase, glycogen synthase and phosphorylase kinase which is necessary for its regulation of PP1 activity. As to expression, highly expressed in liver (at protein level). Expressed predominantly in liver. Expressed moderately in heart. Expressed weakly in prostate, stomach, thyroid, lung, kidney, spleen and skeletal muscle.

In terms of biological role, acts as a glycogen-targeting subunit for phosphatase PP1. Facilitates interaction of the PP1 with enzymes of the glycogen metabolism and regulates its activity. Suppresses the rate at which PP1 dephosphorylates (inactivates) glycogen phosphorylase and enhances the rate at which it activates glycogen synthase and therefore limits glycogen breakdown. Its activity is inhibited by PYGL, resulting in inhibition of the glycogen synthase and glycogen phosphorylase phosphatase activities of PP1. Dramatically increases basal and insulin-stimulated glycogen synthesis upon overexpression in hepatocytes. This is Protein phosphatase 1 regulatory subunit 3B (Ppp1r3b) from Mus musculus (Mouse).